We begin with the raw amino-acid sequence, 765 residues long: Protein transport protein Sec23A (765 aa).

Residues Cys-61, Cys-66, Cys-85, and Cys-88 each contribute to the Zn(2+) site. A Gelsolin-like repeat occupies 632–718 (PEPVLLDSSS…EHGGSQARFL (87 aa)).

This sequence belongs to the SEC23/SEC24 family. SEC23 subfamily. As to quaternary structure, COPII is composed of at least five proteins: the Sec23/24 complex, the Sec13/31 complex and Sar1.

It localises to the cytoplasmic vesicle. The protein resides in the COPII-coated vesicle membrane. Its subcellular location is the endoplasmic reticulum membrane. It is found in the cytoplasm. The protein localises to the cytosol. Component of the coat protein complex II (COPII) which promotes the formation of transport vesicles from the endoplasmic reticulum (ER). The coat has two main functions, the physical deformation of the endoplasmic reticulum membrane into vesicles and the selection of cargo molecules for their transport to the Golgi complex. The protein is Protein transport protein Sec23A of Danio rerio (Zebrafish).